We begin with the raw amino-acid sequence, 405 residues long: uncharacterized protein (405 aa).

12 helical membrane passes run 32–52, 53–73, 84–104, 108–128, 150–170, 171–191, 237–257, 260–280, 291–311, 314–334, 352–372, and 378–398; these read MFVL…VLAG, WLTF…GVLL, IDMI…WLGW, PVVC…IAGI, AVYS…VGWL, GPEA…VCLS, WGAL…VAAG, VVGL…LLAG, IMTA…AEFG, GLTI…VAML, ISIS…GVVI, and AIFV…LSIP.

The protein belongs to the major facilitator superfamily.

It is found in the cell membrane. This is an uncharacterized protein from Sinorhizobium fredii (strain NBRC 101917 / NGR234).